The sequence spans 681 residues: Mating-type protein beta1-1 (681 aa).

The homeobox; TALE-type DNA-binding region spans 165–227; that stretch reads DKNEPTSPTP…DARRRIGWNE (63 aa). Basic and acidic residues predominate over residues 307 to 318; sequence LKNDEARRKREA. Disordered stretches follow at residues 307-341, 353-381, and 394-466; these read LKNDEARRKREASTVGIINQRARHAYPTPERSPAS, AIDSDKLPSVGRKRRRSLESDETVSSPLC, and SPVK…SDPF. Positions 413-430 are enriched in low complexity; sequence TSAAPSPQPSLLPKLTPT.

This sequence belongs to the TALE/M-ATYP homeobox family. May dimerize.

The protein localises to the nucleus. Functionally, has a major regulatory role in sexual and asexual development. It may bind DNA itself or it may have a role in preventing DNA-binding of another protein. This Coprinopsis cinerea (Inky cap fungus) protein is Mating-type protein beta1-1.